The primary structure comprises 488 residues: Probable malate:quinone oxidoreductase (488 aa).

This sequence belongs to the MQO family. Requires FAD as cofactor.

It carries out the reaction (S)-malate + a quinone = a quinol + oxaloacetate. It functions in the pathway carbohydrate metabolism; tricarboxylic acid cycle; oxaloacetate from (S)-malate (quinone route): step 1/1. The polypeptide is Probable malate:quinone oxidoreductase (Neisseria meningitidis serogroup C (strain 053442)).